Reading from the N-terminus, the 466-residue chain is Replication termination factor 1 (466 aa).

DNA-binding domain stretches follow at residues 94–249 and 250–421; these read RDYT…LRRK and YNPF…KKTL. HTH myb-type domains follow at residues 251–304 and 305–363; these read NPFK…QPGE and INRS…SRDI. DNA-binding regions (H-T-H motif) lie at residues 278–300 and 336–359; these read WSLI…RDYI and WSLI…YTLI.

The protein localises to the nucleus. In terms of biological role, mediates site-specific replication termination at the polar replication barrier RTS1, a barrier which ensures that replication of the mat1 locus in S.pombe occurs in the centromere-proximal direction. This Schizosaccharomyces pombe (strain 972 / ATCC 24843) (Fission yeast) protein is Replication termination factor 1 (rtf1).